The following is a 162-amino-acid chain: 2-C-methyl-D-erythritol 2,4-cyclodiphosphate synthase (162 aa).

Asp8 and His10 together coordinate a divalent metal cation. 4-CDP-2-C-methyl-D-erythritol 2-phosphate-binding positions include 8–10 (DVH) and 36–37 (HS). Position 44 (His44) interacts with a divalent metal cation. 4-CDP-2-C-methyl-D-erythritol 2-phosphate-binding positions include 58-60 (DIG), 63-67 (FPDTD), 102-108 (AQAPKMA), 134-137 (TTTE), Phe141, and Arg144.

This sequence belongs to the IspF family. Homotrimer. A divalent metal cation serves as cofactor.

The catalysed reaction is 4-CDP-2-C-methyl-D-erythritol 2-phosphate = 2-C-methyl-D-erythritol 2,4-cyclic diphosphate + CMP. It participates in isoprenoid biosynthesis; isopentenyl diphosphate biosynthesis via DXP pathway; isopentenyl diphosphate from 1-deoxy-D-xylulose 5-phosphate: step 4/6. Involved in the biosynthesis of isopentenyl diphosphate (IPP) and dimethylallyl diphosphate (DMAPP), two major building blocks of isoprenoid compounds. Catalyzes the conversion of 4-diphosphocytidyl-2-C-methyl-D-erythritol 2-phosphate (CDP-ME2P) to 2-C-methyl-D-erythritol 2,4-cyclodiphosphate (ME-CPP) with a corresponding release of cytidine 5-monophosphate (CMP). This chain is 2-C-methyl-D-erythritol 2,4-cyclodiphosphate synthase, found in Yersinia pseudotuberculosis serotype IB (strain PB1/+).